The following is a 117-amino-acid chain: Large ribosomal subunit protein uL18 (117 aa).

It belongs to the universal ribosomal protein uL18 family. As to quaternary structure, part of the 50S ribosomal subunit; part of the 5S rRNA/L5/L18/L25 subcomplex. Contacts the 5S and 23S rRNAs.

In terms of biological role, this is one of the proteins that bind and probably mediate the attachment of the 5S RNA into the large ribosomal subunit, where it forms part of the central protuberance. This Coxiella burnetii (strain CbuK_Q154) (Coxiella burnetii (strain Q154)) protein is Large ribosomal subunit protein uL18.